Reading from the N-terminus, the 250-residue chain is Glutathione transferase omega-1 (250 aa).

The 81-residue stretch at 21 to 101 folds into the GST N-terminal domain; sequence SKGSFRVYNM…YLDDAFPETR (81 aa). The Nucleophile role is filled by cysteine 33. Glutathione is bound by residues lysine 60 and 85–86; that span reads ES. One can recognise a GST C-terminal domain in the interval 106-234; that stretch reads DPYEKVQQKL…TQSLEHGAAF (129 aa).

The protein belongs to the GST superfamily. Omega family. In terms of assembly, homodimer. In terms of tissue distribution, expressed in the intestinal cells.

It localises to the cytoplasm. The enzyme catalyses RX + glutathione = an S-substituted glutathione + a halide anion + H(+). It catalyses the reaction L-dehydroascorbate + 2 glutathione = glutathione disulfide + L-ascorbate. The catalysed reaction is methylarsonate + 2 glutathione + H(+) = methylarsonous acid + glutathione disulfide + H2O. Its function is as follows. Exhibits glutathione-dependent thiol transferase activity. Has dehydroascorbate reductase activity and may contribute to the recycling of ascorbic acid. Participates in the biotransformation of inorganic arsenic and reduces monomethylarsonic acid (MMA). Protects against environmental stress and oxidative stress. The sequence is that of Glutathione transferase omega-1 (gsto-1) from Caenorhabditis elegans.